Consider the following 466-residue polypeptide: GTPase Der (466 aa).

EngA-type G domains follow at residues 30 to 193 and 203 to 376; these read PVVA…PEVS and RRVA…ASWD. Residues 36–43, 83–87, 145–148, 209–216, 256–260, and 321–324 contribute to the GTP site; these read GRPNVGKS, DTGGW, NKVD, GKPNVGKS, DTAGL, and NKWD. The KH-like domain maps to 377–459; that stretch reads TRIATGPLNS…PIRINVRVRE (83 aa).

Belongs to the TRAFAC class TrmE-Era-EngA-EngB-Septin-like GTPase superfamily. EngA (Der) GTPase family. As to quaternary structure, associates with the 50S ribosomal subunit.

GTPase that plays an essential role in the late steps of ribosome biogenesis. The chain is GTPase Der from Mycolicibacterium paratuberculosis (strain ATCC BAA-968 / K-10) (Mycobacterium paratuberculosis).